A 468-amino-acid polypeptide reads, in one-letter code: ATP synthase subunit beta 1 (468 aa).

An ATP-binding site is contributed by 155-162 (GGAGVGKT).

It belongs to the ATPase alpha/beta chains family. F-type ATPases have 2 components, CF(1) - the catalytic core - and CF(0) - the membrane proton channel. CF(1) has five subunits: alpha(3), beta(3), gamma(1), delta(1), epsilon(1). CF(0) has three main subunits: a(1), b(2) and c(9-12). The alpha and beta chains form an alternating ring which encloses part of the gamma chain. CF(1) is attached to CF(0) by a central stalk formed by the gamma and epsilon chains, while a peripheral stalk is formed by the delta and b chains.

The protein localises to the cell inner membrane. The enzyme catalyses ATP + H2O + 4 H(+)(in) = ADP + phosphate + 5 H(+)(out). Functionally, produces ATP from ADP in the presence of a proton gradient across the membrane. The catalytic sites are hosted primarily by the beta subunits. The sequence is that of ATP synthase subunit beta 1 from Syntrophotalea carbinolica (strain DSM 2380 / NBRC 103641 / GraBd1) (Pelobacter carbinolicus).